Consider the following 272-residue polypeptide: Transcription factor PU.1 (272 aa).

The interval 126-165 (SPAHQQSSDEEEGERQSPPLEVSDGEADGLEPGPGLLHGE) is disordered. A phosphoserine mark is found at serine 142 and serine 148. Low complexity predominate over residues 155-165 (LEPGPGLLHGE). The ETS DNA-binding region spans 172–255 (IRLYQFLLDL…VKKKLTYQFS (84 aa)). 4 residues coordinate DNA: lysine 219, arginine 232, arginine 235, and lysine 245.

The protein belongs to the ETS family. As to quaternary structure, binds DNA as a monomer. Can form homomers. Directly interacts with CEBPD/NF-IL6-beta; this interaction does not affect DNA-binding properties of each partner. Interacts with NONO/p54(nrb). Interacts with RUNX1/AML1. Interacts with GFI1; the interaction represses SPI1 transcriptional activity, hence blocks SPI1-induced macrophage differentiation of myeloid progenitor cells. Interacts with CEBPE. Interacts with IRF4/Pip and IRF8. Interacts with JUN. Interacts with RB1. Interacts with TBP. As to expression, expressed in spleen, thymus and bone-marrow macrophages.

The protein localises to the nucleus. Its activity is regulated as follows. Transcriptional activity at macrophage-specific genes is inhibited by interaction with GFI1, which results in inhibition of SPI1-induced macrophage differentiation of myeloid progenitor cells, but not that of the granulocyte lineage. Its function is as follows. Pioneer transcription factor, which controls hematopoietic cell fate by decompacting stem cell heterochromatin and allowing other transcription factors to enter otherwise inaccessible genomic sites. Once in open chromatin, can directly control gene expression by binding genetic regulatory elements and can also more broadly influence transcription by recruiting transcription factors, such as interferon regulatory factors (IRFs), to otherwise inaccessible genomic regions. Transcriptionally activates genes important for myeloid and lymphoid lineages, such as CSF1R. Transcriptional activation from certain promoters, possibly containing low affinity binding sites, is achieved cooperatively with other transcription factors. FCER1A transactivation is achieved in cooperation with GATA1. May be particularly important for the pro- to pre-B cell transition. Binds (via the ETS domain) onto the purine-rich DNA core sequence 5'-GAGGAA-3', also known as the PU-box. In vitro can bind RNA and interfere with pre-mRNA splicing. In Mus musculus (Mouse), this protein is Transcription factor PU.1 (Spi1).